We begin with the raw amino-acid sequence, 875 residues long: Serine/threonine-protein kinase ATG1 (875 aa).

In terms of domain architecture, Protein kinase spans 22 to 318; that stretch reads YSIGPEIGKG…FNEFFNDPLI (297 aa). ATP is bound by residues 28-36 and Lys-51; that span reads IGKGSFATV. Asp-168 acts as the Proton acceptor in catalysis. Over residues 367–379 the composition is skewed to basic and acidic residues; it reads EKSKQDLPAREVS. 2 disordered regions span residues 367 to 422 and 470 to 515; these read EKSK…QPHN and INPR…DRRI. The segment covering 380-389 has biased composition (polar residues); that stretch reads THASESQTKA. Residues 390–405 show a composition bias toward basic and acidic residues; the sequence is VDTRPSSRDEEIKEII. Polar residues-rich tracts occupy residues 406 to 420, 473 to 490, and 497 to 508; these read NKNS…SIQP, RRTS…NNMQ, and LRSNSSGSQRRP.

It belongs to the protein kinase superfamily. Ser/Thr protein kinase family. APG1/unc-51/ULK1 subfamily. As to quaternary structure, homodimer. Forms a ternary complex with ATG13 and ATG17.

The protein localises to the cytoplasm. It is found in the preautophagosomal structure membrane. The catalysed reaction is L-seryl-[protein] + ATP = O-phospho-L-seryl-[protein] + ADP + H(+). It carries out the reaction L-threonyl-[protein] + ATP = O-phospho-L-threonyl-[protein] + ADP + H(+). Serine/threonine protein kinase involved in the cytoplasm to vacuole transport (Cvt) and found to be essential in autophagy, where it is required for the formation of autophagosomes. Involved in the clearance of protein aggregates which cannot be efficiently cleared by the proteasome. Required for selective autophagic degradation of the nucleus (nucleophagy) as well as for mitophagy which contributes to regulate mitochondrial quantity and quality by eliminating the mitochondria to a basal level to fulfill cellular energy requirements and preventing excess ROS production. Also involved in endoplasmic reticulum-specific autophagic process, in selective removal of ER-associated degradation (ERAD) substrates. Plays a key role in ATG9 and ATG23 cycling through the pre-autophagosomal structure and is necessary to promote ATG18 binding to ATG9 through phosphorylation of ATG9. Catalyzes phosphorylation of ATG4, decreasing the interaction between ATG4 and ATG8 and impairing deconjugation of PE-conjugated forms of ATG8. The polypeptide is Serine/threonine-protein kinase ATG1 (Debaryomyces hansenii (strain ATCC 36239 / CBS 767 / BCRC 21394 / JCM 1990 / NBRC 0083 / IGC 2968) (Yeast)).